A 149-amino-acid polypeptide reads, in one-letter code: Calmodulin-2 (149 aa).

Residue alanine 2 is modified to N-acetylalanine. 4 consecutive EF-hand domains span residues 8-43, 44-79, 81-116, and 117-149; these read EQIA…LGQN, PTEA…KMKD, DSEE…LGEK, and LTDE…MTSK. Aspartate 21, aspartate 23, aspartate 25, threonine 27, glutamate 32, aspartate 57, aspartate 59, asparagine 61, threonine 63, glutamate 68, aspartate 94, aspartate 96, asparagine 98, and glutamate 105 together coordinate Ca(2+). N6,N6,N6-trimethyllysine is present on lysine 116. Ca(2+) contacts are provided by aspartate 130, aspartate 132, aspartate 134, glutamine 136, and glutamate 141.

The protein belongs to the calmodulin family.

Functionally, calmodulin mediates the control of a large number of enzymes, ion channels and other proteins by Ca(2+). Among the enzymes to be stimulated by the calmodulin-Ca(2+) complex are a number of protein kinases and phosphatases. This chain is Calmodulin-2 (CAM2), found in Branchiostoma lanceolatum (Common lancelet).